A 562-amino-acid polypeptide reads, in one-letter code: NRAMP-like transporter smf-1 (562 aa).

At 1–55 (MASSNNDGPIEPEAEPWRITQNDHLEQDLLEEDAESQERVDIPVDDVEKAFSFKK) the chain is on the cytoplasmic side. Residues 56 to 76 (LWAFTGPGFLMSIAYLDPGNI) form a helical membrane-spanning segment. Residues 77 to 83 (ESDLQSG) are Extracellular-facing. A helical transmembrane segment spans residues 84–104 (AQAAYKLLWVLLSAHIIGMLL). At 105–140 (QRMSARLGVVSGKHMAEVAYQFYPRLPRIILWLMIE) the chain is on the cytoplasmic side. A helical transmembrane segment spans residues 141 to 161 (IAIVCSDMQEVIGTAIAIFLL). The Extracellular portion of the chain corresponds to 162-164 (SKG). A helical membrane pass occupies residues 165-185 (FVPLYVGVFITILDTFTFLLI). At 186 to 194 (DRYGIRKLE) the chain is on the cytoplasmic side. Residues 195–215 (LIFGFLILTMTVSFGYEFVVV) traverse the membrane as a helical segment. At 216–241 (KPPIGEVISGMVVPWCAGCGKGEFMQ) the chain is on the extracellular side. A helical transmembrane segment spans residues 242-262 (AISVVGAVIMPHNLYLHSALV). Topologically, residues 263–287 (KSRRVDRKDRRRVAEANKYFTLESA) are cytoplasmic. The helical transmembrane segment at 288 to 308 (IALFLSFFINLFVVAVFAHGL) threads the bilayer. At 309 to 347 (YQKTNADVREMCIARHDIPDADIFPNNTEPVEVDIYKGG) the chain is on the extracellular side. N-linked (GlcNAc...) asparagine glycosylation occurs at N334. A helical membrane pass occupies residues 348-368 (IYLGCQFGAIAMFIWGIGIFA). The Cytoplasmic segment spans residues 369 to 398 (AGQSSTMTGTYTGQFVMEGFVKIEWPKWKR). Residues 399-419 (VLITRAIAITPTLVLTFYSQG) form a helical membrane-spanning segment. Over 420–428 (VQNLTGMND) the chain is Extracellular. The N-linked (GlcNAc...) asparagine glycan is linked to N422. Residues 429 to 449 (FLNCVQMIQLPFALIPIITFT) form a helical membrane-spanning segment. Residues 450–462 (SSRKIMHDFRSSK) are Cytoplasmic-facing. The helical transmembrane segment at 463–483 (VFQIFALITSALILSINVYFI) threads the bilayer. The Extracellular portion of the chain corresponds to 484–496 (SDYVFSRLGSEWY). A helical transmembrane segment spans residues 497-517 (IIMVLAPITFAYVLFVLYLAL). Residues 518–562 (YCLVSCEIIPDTVSIRGFSFNKSYENDAPWLAVDSSAVHDNAGYQ) are Cytoplasmic-facing.

Belongs to the NRAMP family. In terms of tissue distribution, expressed in dopaminergic neurons (at protein level). Expressed predominantly in anterior and posterior intestine, rectal gland cell, H-shaped excretory cell, vulva cells, proximal uterus and spermatheca in adults. Weakly expressed in hyp7 hypodermis, pharyngeal muscles and some anterior sensory, ring and posterior head neurons in adults. Expressed in the anchor cell at the larval stage.

It localises to the apical cell membrane. It is found in the cytoplasmic vesicle membrane. In terms of biological role, probable divalent metal ion transporter which regulates Mn(2+) uptake. This Caenorhabditis elegans protein is NRAMP-like transporter smf-1 (smf-1).